Here is a 178-residue protein sequence, read N- to C-terminus: Caveolin-1 (178 aa).

Position 2 is an N-acetylserine (serine 2). Serine 2 carries the post-translational modification Phosphoserine. The interval 2–94 (SGGKYVDSEG…WKASFTTFTV (93 aa)) is required for homooligomerization. At 2 to 104 (SGGKYVDSEG…TKYWFYRLLS (103 aa)) the chain is on the cytoplasmic side. N6-acetyllysine; alternate is present on lysine 5. Residue lysine 5 forms a Glycyl lysine isopeptide (Lys-Gly) (interchain with G-Cter in ubiquitin); alternate linkage. Phosphotyrosine is present on tyrosine 6. Residue serine 9 is modified to Phosphoserine. Phosphotyrosine; by ABL1 is present on tyrosine 14. Phosphotyrosine is present on tyrosine 25. Residues lysine 26 and lysine 30 each participate in a glycyl lysine isopeptide (Lys-Gly) (interchain with G-Cter in ubiquitin) cross-link. The residue at position 37 (serine 37) is a Phosphoserine. Glycyl lysine isopeptide (Lys-Gly) (interchain with G-Cter in ubiquitin) cross-links involve residues lysine 39, lysine 47, and lysine 57. The interaction with CAVIN3 stretch occupies residues 82 to 94 (DGIWKASFTTFTV). An intramembrane region (helical) is located at residues 105 to 125 (ALFGIPMALIWGIYFAILSFL). Residues 126 to 178 (HIWAVVPCIKSFLIEIQCISRVYSIYIHTVCDPLFEAIGKIFSNVRISLQKEI) are Cytoplasmic-facing. The interacts with SPRY1, SPRY2, SPRY3 and SPRY4 stretch occupies residues 131-142 (VPCIKSFLIEIQ). Residues cysteine 133, cysteine 143, and cysteine 156 are each lipidated (S-palmitoyl cysteine). The tract at residues 149 to 160 (SIYIHTVCDPLF) is interacts with SPRY1, SPRY2, and SPRY4. The segment at 167-178 (FSNVRISLQKEI) is interacts with SPRY1, SPRY2, SPRY3 and SPRY4.

Belongs to the caveolin family. In terms of assembly, homooligomer. Interacts with GLIPR2. Interacts with NOSTRIN. Interacts with SNAP25 and STX1A. Interacts (via the N-terminus) with DPP4; the interaction is direct. Interacts with CTNNB1, CDH1 and JUP. Interacts with PACSIN2; this interaction induces membrane tubulation. Interacts with SLC7A9. Interacts with BMX and BTK. Interacts with TGFBR1. Interacts with CAVIN3 (via leucine-zipper domain) in a cholesterol-sensitive manner. Interacts with CAVIN1. Interacts with EHD2 in a cholesterol-dependent manner. Forms a ternary complex with UBXN6 and VCP; mediates CAV1 targeting to lysosomes for degradation. Interacts with ABCG1; this interaction regulates ABCG1-mediated cholesterol efflux. Interacts with NEU3; this interaction enhances NEU3 sialidase activity within caveola. Interacts (via C-terminus) with SPRY1, SPRY2 (via C-terminus), SPRY3, and SPRY4. Interacts with IGFBP5; this interaction allows trafficking of IGFBP5 from the plasma membrane to the nucleus. Post-translationally, phosphorylated at Tyr-14 by ABL1 in response to oxidative stress. In terms of processing, ubiquitinated. Undergo monoubiquitination and multi- and/or polyubiquitination. Monoubiquitination of N-terminal lysines promotes integration in a ternary complex with UBXN6 and VCP which promotes oligomeric CAV1 targeting to lysosomes for degradation. Ubiquitinated by ZNRF1; leading to degradation and modulation of the TLR4-mediated immune response.

Its subcellular location is the golgi apparatus membrane. The protein localises to the cell membrane. It is found in the membrane. The protein resides in the caveola. It localises to the membrane raft. Functionally, may act as a scaffolding protein within caveolar membranes. Forms a stable heterooligomeric complex with CAV2 that targets to lipid rafts and drives caveolae formation. Mediates the recruitment of CAVIN proteins (CAVIN1/2/3/4) to the caveolae. Interacts directly with G-protein alpha subunits and can functionally regulate their activity. Involved in the costimulatory signal essential for T-cell receptor (TCR)-mediated T-cell activation. Its binding to DPP4 induces T-cell proliferation and NF-kappa-B activation in a T-cell receptor/CD3-dependent manner. Recruits CTNNB1 to caveolar membranes and may regulate CTNNB1-mediated signaling through the Wnt pathway. Negatively regulates TGFB1-mediated activation of SMAD2/3 by mediating the internalization of TGFBR1 from membrane rafts leading to its subsequent degradation. Binds 20(S)-hydroxycholesterol (20(S)-OHC). In Aotus nancymaae (Ma's night monkey), this protein is Caveolin-1 (CAV1).